We begin with the raw amino-acid sequence, 349 residues long: Holliday junction branch migration complex subunit RuvB (349 aa).

Residues 1–15 (MSDDYRETDPTRQPE) show a composition bias toward basic and acidic residues. The segment at 1–25 (MSDDYRETDPTRQPEDMGEGSLRPE) is disordered. The large ATPase domain (RuvB-L) stretch occupies residues 1–183 (MSDDYRETDP…FGIPLRLVFY (183 aa)). ATP is bound by residues leucine 22, arginine 23, glycine 64, lysine 67, threonine 68, threonine 69, 130–132 (EDF), arginine 173, tyrosine 183, and arginine 220. Residue threonine 68 coordinates Mg(2+). Residues 184–254 (TPEELRAIVS…LADAALGRLE (71 aa)) are small ATPAse domain (RuvB-S). The tract at residues 257-349 (ERGLDAMDRR…SSLEQDDSAP (93 aa)) is head domain (RuvB-H). Arginine 293, arginine 312, and arginine 317 together coordinate DNA.

It belongs to the RuvB family. Homohexamer. Forms an RuvA(8)-RuvB(12)-Holliday junction (HJ) complex. HJ DNA is sandwiched between 2 RuvA tetramers; dsDNA enters through RuvA and exits via RuvB. An RuvB hexamer assembles on each DNA strand where it exits the tetramer. Each RuvB hexamer is contacted by two RuvA subunits (via domain III) on 2 adjacent RuvB subunits; this complex drives branch migration. In the full resolvosome a probable DNA-RuvA(4)-RuvB(12)-RuvC(2) complex forms which resolves the HJ.

The protein localises to the cytoplasm. It catalyses the reaction ATP + H2O = ADP + phosphate + H(+). In terms of biological role, the RuvA-RuvB-RuvC complex processes Holliday junction (HJ) DNA during genetic recombination and DNA repair, while the RuvA-RuvB complex plays an important role in the rescue of blocked DNA replication forks via replication fork reversal (RFR). RuvA specifically binds to HJ cruciform DNA, conferring on it an open structure. The RuvB hexamer acts as an ATP-dependent pump, pulling dsDNA into and through the RuvAB complex. RuvB forms 2 homohexamers on either side of HJ DNA bound by 1 or 2 RuvA tetramers; 4 subunits per hexamer contact DNA at a time. Coordinated motions by a converter formed by DNA-disengaged RuvB subunits stimulates ATP hydrolysis and nucleotide exchange. Immobilization of the converter enables RuvB to convert the ATP-contained energy into a lever motion, pulling 2 nucleotides of DNA out of the RuvA tetramer per ATP hydrolyzed, thus driving DNA branch migration. The RuvB motors rotate together with the DNA substrate, which together with the progressing nucleotide cycle form the mechanistic basis for DNA recombination by continuous HJ branch migration. Branch migration allows RuvC to scan DNA until it finds its consensus sequence, where it cleaves and resolves cruciform DNA. This is Holliday junction branch migration complex subunit RuvB from Gluconobacter oxydans (strain 621H) (Gluconobacter suboxydans).